Consider the following 142-residue polypeptide: Peptide methionine sulfoxide reductase MsrB (142 aa).

A MsrB domain is found at 13–135 (EKDWKVELSE…NSLSMTFKGE (123 aa)). The Zn(2+) site is built by C52, C55, C101, and C104. The Nucleophile role is filled by C124.

The protein belongs to the MsrB Met sulfoxide reductase family. Zn(2+) is required as a cofactor.

It catalyses the reaction L-methionyl-[protein] + [thioredoxin]-disulfide + H2O = L-methionyl-(R)-S-oxide-[protein] + [thioredoxin]-dithiol. The polypeptide is Peptide methionine sulfoxide reductase MsrB (Alteromonas mediterranea (strain DSM 17117 / CIP 110805 / LMG 28347 / Deep ecotype)).